The sequence spans 853 residues: DNA mismatch repair protein MutS (853 aa).

614-621 (GPNMGGKS) is an ATP binding site.

The protein belongs to the DNA mismatch repair MutS family.

Functionally, this protein is involved in the repair of mismatches in DNA. It is possible that it carries out the mismatch recognition step. This protein has a weak ATPase activity. This is DNA mismatch repair protein MutS from Escherichia coli O7:K1 (strain IAI39 / ExPEC).